The chain runs to 409 residues: Regulator of Ty1 transposition protein 103 (409 aa).

A CID domain is found at 1–135 (MPFSSEQFTT…DIERSLKTES (135 aa)). The interval 250 to 409 (LNKNVDEDNI…IQDLLSKLAN (160 aa)) is disordered. A compositionally biased stretch (acidic residues) spans 266–289 (GDGDDDDDDGDNDDDDDDDDDDKN). 3 stretches are compositionally biased toward basic and acidic residues: residues 307-323 (TDKK…EHKN), 337-363 (RTHD…KTSE), and 370-380 (EDGHYELDIEG).

This sequence belongs to the UPF0400 (RTT103) family. Interacts with PCF11, RAI1, RAT1, RPO21 and RBP2.

The protein resides in the nucleus. Functionally, involved in transcription termination by RNA polymerase II and in regulation of Ty1 transposition. In Saccharomyces cerevisiae (strain ATCC 204508 / S288c) (Baker's yeast), this protein is Regulator of Ty1 transposition protein 103 (RTT103).